Here is a 603-residue protein sequence, read N- to C-terminus: Podocalyxin-like protein 2 (603 aa).

The first 28 residues, 1-28, serve as a signal peptide directing secretion; sequence MARPLRAARLPPPLLLLLAAGASLGAYA. The Extracellular segment spans residues 29 to 499; it reads VGVDEPGPEG…ATQVRSDYGT (471 aa). Residues 53-92 are disordered; it reads FEPLDSEEPSEAMGLDAGLAPGSGFPSEDSEESRLLQPPQ. Ser75 carries an O-linked (Xyl...) (chondroitin sulfate) serine glycan. Sulfotyrosine is present on Tyr93. N-linked (GlcNAc...) asparagine glycosylation occurs at Asn101. Tyr113 bears the Sulfotyrosine mark. The interval 124–368 is disordered; it reads SMEDPGQAPD…LEGQAAEAHS (245 aa). A compositionally biased stretch (acidic residues) spans 156–187; that stretch reads QEEEEEEEEEEEEREEEEREKEAEEEEEEEEL. Over residues 196–216 the composition is skewed to low complexity; the sequence is ATAQAHAPSPSTSSSTSSQSP. 3 stretches are compositionally biased toward polar residues: residues 240–266, 302–314, and 339–349; these read VKPTLSVPSVTPSTVAPGVQNYSQESG, ALPSSSLPQTVPP, and DTESTPSSATW. Residue Asn260 is glycosylated (N-linked (GlcNAc...) asparagine). N-linked (GlcNAc...) asparagine glycosylation is present at Asn394. The chain crosses the membrane as a helical span at residues 500–520; that stretch reads LFVVLVIIGVICFIIIVLGLL. Residues 521-603 lie on the Cytoplasmic side of the membrane; sequence YNCWQRRMPK…SDVFEEDTHL (83 aa). The span at 558–570 shows a compositional bias: polar residues; that stretch reads DSQSEMQEKQPSL. The tract at residues 558 to 603 is disordered; it reads DSQSEMQEKQPSLNGGAINGPSSWSALMGSKRDPEDSDVFEEDTHL. A phosphoserine mark is found at Ser569 and Ser594. Residues 592–603 are compositionally biased toward acidic residues; it reads EDSDVFEEDTHL.

It belongs to the podocalyxin family. In terms of assembly, homodimer; disulfide-linked. Interacts with SELL, SELE and SELP. In terms of processing, glycosylated; contains chondroitin sulfate. Displays sialylated O-linked oligosaccharides. Sulfation is necessary for interaction with SELL. Sialylated O-linked oligosaccharides are necessary for interaction with SELL, SELE and SELP.

The protein resides in the membrane. Acts as a ligand for vascular selectins. Mediates rapid rolling of leukocytes over vascular surfaces through high affinity divalent cation-dependent interactions with E-, P- and L-selectins. The sequence is that of Podocalyxin-like protein 2 (Podxl2) from Mus musculus (Mouse).